The following is a 443-amino-acid chain: Tubulin beta-1/beta-2 chain (443 aa).

GTP is bound by residues glutamine 11, glutamate 69, serine 138, glycine 142, threonine 143, glycine 144, asparagine 204, and asparagine 226. Glutamate 69 is a binding site for Mg(2+). Residues 424–443 (QYQDASAEEEGEFEGEEEEA) are disordered. A compositionally biased stretch (acidic residues) spans 429–443 (SAEEEGEFEGEEEEA).

It belongs to the tubulin family. As to quaternary structure, dimer of alpha and beta chains. A typical microtubule is a hollow water-filled tube with an outer diameter of 25 nm and an inner diameter of 15 nM. Alpha-beta heterodimers associate head-to-tail to form protofilaments running lengthwise along the microtubule wall with the beta-tubulin subunit facing the microtubule plus end conferring a structural polarity. Microtubules usually have 13 protofilaments but different protofilament numbers can be found in some organisms and specialized cells. Requires Mg(2+) as cofactor.

It is found in the cytoplasm. The protein localises to the cytoskeleton. In terms of biological role, tubulin is the major constituent of microtubules, a cylinder consisting of laterally associated linear protofilaments composed of alpha- and beta-tubulin heterodimers. Microtubules grow by the addition of GTP-tubulin dimers to the microtubule end, where a stabilizing cap forms. Below the cap, tubulin dimers are in GDP-bound state, owing to GTPase activity of alpha-tubulin. The sequence is that of Tubulin beta-1/beta-2 chain (TUBB1) from Chlamydomonas reinhardtii (Chlamydomonas smithii).